We begin with the raw amino-acid sequence, 423 residues long: Diels-Alderase cheD (423 aa).

The N-terminal stretch at 1–18 is a signal peptide; sequence MKLCALFAGAVISTSAVA. 2 N-linked (GlcNAc...) asparagine glycosylation sites follow: N84 and N132.

It belongs to the Diels-Alderase family.

It participates in secondary metabolite biosynthesis. Functionally, diels-Alderase; part of the gene cluster that mediates the biosynthesis of chaetoglobosin A which has a unique inhibitory activity against actin polymerization in mammalian cells. Chaetoglobosin A and its intermediates are involved in the morphological differentiation of C.globosum. The first step of the pathway is the synthesis of prochaetoglobosin I via condensation of one acetyl-CoA, 8 malonyl-CoA, and a L-tryptophan molecule by the PKS-NRPS hybrid synthetase cheA, followed by reduction of backbone double bond to install desired geometry by the enoyl reductase cheB. Further multiple oxidation steps performed by the cytochrome P450 monooxygenases cheE and cheG, as well as by the FAD-linked oxidoreductase cheF, lead to the formation of chaetoglobosin A. Depending on the order of action of these reductases, distinct intermediates can be identified. Within the pathway, the cytochrome P450 monooxygenase cheE catalyzes a stereospecific epoxidation on prochaetoglobosin I, cytoglobosin D, and chaetoglobosin J intermediates. The FAD-linked oxidoreductase cheF performs dehydrogenation of the C-20 hydroxyl groups in the 20-dihyrochaetoglobosin A and cytoglobosin D intermediates. Finally, the cytochrome P450 monooxygenase cheG can catalyze the stereospecific dihydroxylation of prochaetoglobosin I and prochaetoglobosin IV at C-19 and C-20, respectively. The Diels-Alderase cheD may play a role in the post-PKS-NRPS biosynthetic steps catalyzing Diels-Alder cyclization. The chain is Diels-Alderase cheD from Chaetomium globosum (strain ATCC 6205 / CBS 148.51 / DSM 1962 / NBRC 6347 / NRRL 1970) (Soil fungus).